We begin with the raw amino-acid sequence, 572 residues long: Asparagine synthetase [glutamine-hydrolyzing] 1 (572 aa).

Residue Cys2 is the For GATase activity of the active site. A Glutamine amidotransferase type-2 domain is found at 2–186 (CGIFAAFRHE…PGHVYDSKTD (185 aa)). L-glutamine-binding positions include 49–53 (RLAIV), 74–76 (NGE), and Asp97. The Asparagine synthetase domain occupies 194 to 546 (PDWLDEKRIP…QKTVADTVMR (353 aa)). ATP is bound at residue Leu233. The residue at position 265 (Ser265) is a Phosphoserine. Residues Ile292 and 366-367 (SG) contribute to the ATP site. Ser509 carries the post-translational modification Phosphoserine.

The catalysed reaction is L-aspartate + L-glutamine + ATP + H2O = L-asparagine + L-glutamate + AMP + diphosphate + H(+). It functions in the pathway amino-acid biosynthesis; L-asparagine biosynthesis; L-asparagine from L-aspartate (L-Gln route): step 1/1. The polypeptide is Asparagine synthetase [glutamine-hydrolyzing] 1 (ASN1) (Saccharomyces cerevisiae (strain ATCC 204508 / S288c) (Baker's yeast)).